Here is a 116-residue protein sequence, read N- to C-terminus: Iron-sulfur cluster insertion protein ErpA (116 aa).

Cysteine 44, cysteine 108, and cysteine 110 together coordinate iron-sulfur cluster.

The protein belongs to the HesB/IscA family. Homodimer. Iron-sulfur cluster is required as a cofactor.

Required for insertion of 4Fe-4S clusters for at least IspG. This is Iron-sulfur cluster insertion protein ErpA from Francisella philomiragia subsp. philomiragia (strain ATCC 25017 / CCUG 19701 / FSC 153 / O#319-036).